A 212-amino-acid polypeptide reads, in one-letter code: Uracil phosphoribosyltransferase (212 aa).

5-phospho-alpha-D-ribose 1-diphosphate is bound by residues Arg78, Arg103, and 130–138 (DPMLATGGS). Residues Ile193 and 198 to 200 (GDA) contribute to the uracil site. Residue Asp199 coordinates 5-phospho-alpha-D-ribose 1-diphosphate.

This sequence belongs to the UPRTase family. Requires Mg(2+) as cofactor.

The catalysed reaction is UMP + diphosphate = 5-phospho-alpha-D-ribose 1-diphosphate + uracil. It participates in pyrimidine metabolism; UMP biosynthesis via salvage pathway; UMP from uracil: step 1/1. Allosterically activated by GTP. Catalyzes the conversion of uracil and 5-phospho-alpha-D-ribose 1-diphosphate (PRPP) to UMP and diphosphate. This Pseudomonas aeruginosa (strain LESB58) protein is Uracil phosphoribosyltransferase.